Here is a 260-residue protein sequence, read N- to C-terminus: ATP synthase subunit a (260 aa).

The next 6 membrane-spanning stretches (helical) occupy residues 37–57, 95–115, 125–145, 154–174, 191–211, and 233–253; these read FTNA…FMTL, FFPF…IGMF, IVVT…TGFV, VFVP…IEII, MLAG…FMTM, and EFLV…MYLH.

This sequence belongs to the ATPase A chain family. As to quaternary structure, F-type ATPases have 2 components, CF(1) - the catalytic core - and CF(0) - the membrane proton channel. CF(1) has five subunits: alpha(3), beta(3), gamma(1), delta(1), epsilon(1). CF(0) has three main subunits: a(1), b(2) and c(9-12). The alpha and beta chains form an alternating ring which encloses part of the gamma chain. CF(1) is attached to CF(0) by a central stalk formed by the gamma and epsilon chains, while a peripheral stalk is formed by the delta and b chains.

Its subcellular location is the cell inner membrane. Its function is as follows. Key component of the proton channel; it plays a direct role in the translocation of protons across the membrane. This is ATP synthase subunit a from Parvibaculum lavamentivorans (strain DS-1 / DSM 13023 / NCIMB 13966).